The chain runs to 360 residues: Photosystem II protein D1 (360 aa).

Transmembrane regions (helical) follow at residues Tyr-29–Ser-46, His-118–Leu-133, and Trp-142–Ala-156. His-118 serves as a coordination point for chlorophyll a. Residue Tyr-126 coordinates pheophytin a. [CaMn4O5] cluster is bound by residues Asp-170 and Glu-189. Residues Phe-197 to Leu-218 form a helical membrane-spanning segment. His-198 provides a ligand contact to chlorophyll a. A quinone-binding positions include His-215 and Ser-264–Phe-265. Residue His-215 coordinates Fe cation. His-272 contributes to the Fe cation binding site. The helical transmembrane segment at Phe-274–Met-288 threads the bilayer. [CaMn4O5] cluster contacts are provided by His-332, Glu-333, Asp-342, and Ala-344. A propeptide spanning residues Ser-345–Ala-360 is cleaved from the precursor.

Belongs to the reaction center PufL/M/PsbA/D family. As to quaternary structure, PSII is composed of 1 copy each of membrane proteins PsbA, PsbB, PsbC, PsbD, PsbE, PsbF, PsbH, PsbI, PsbJ, PsbK, PsbL, PsbM, PsbT, PsbX, PsbY, PsbZ, Psb30/Ycf12, at least 3 peripheral proteins of the oxygen-evolving complex and a large number of cofactors. It forms dimeric complexes. The D1/D2 heterodimer binds P680, chlorophylls that are the primary electron donor of PSII, and subsequent electron acceptors. It shares a non-heme iron and each subunit binds pheophytin, quinone, additional chlorophylls, carotenoids and lipids. D1 provides most of the ligands for the Mn4-Ca-O5 cluster of the oxygen-evolving complex (OEC). There is also a Cl(-1) ion associated with D1 and D2, which is required for oxygen evolution. The PSII complex binds additional chlorophylls, carotenoids and specific lipids. is required as a cofactor. Post-translationally, tyr-161 forms a radical intermediate that is referred to as redox-active TyrZ, YZ or Y-Z. In terms of processing, C-terminally processed by CTPA; processing is essential to allow assembly of the oxygen-evolving complex and thus photosynthetic growth.

The protein resides in the plastid. It is found in the chloroplast thylakoid membrane. It carries out the reaction 2 a plastoquinone + 4 hnu + 2 H2O = 2 a plastoquinol + O2. Its function is as follows. Photosystem II (PSII) is a light-driven water:plastoquinone oxidoreductase that uses light energy to abstract electrons from H(2)O, generating O(2) and a proton gradient subsequently used for ATP formation. It consists of a core antenna complex that captures photons, and an electron transfer chain that converts photonic excitation into a charge separation. The D1/D2 (PsbA/PsbD) reaction center heterodimer binds P680, the primary electron donor of PSII as well as several subsequent electron acceptors. This is Photosystem II protein D1 from Thalassiosira pseudonana (Marine diatom).